We begin with the raw amino-acid sequence, 286 residues long: uncharacterized protein (286 aa).

Helical transmembrane passes span I52–L74, L79–L101, W142–F161, V168–L190, I203–V225, and I257–M276.

The protein resides in the cell membrane. This is an uncharacterized protein from Archaeoglobus fulgidus (strain ATCC 49558 / DSM 4304 / JCM 9628 / NBRC 100126 / VC-16).